A 709-amino-acid polypeptide reads, in one-letter code: UV-stimulated scaffold protein A (709 aa).

The segment covering 1–10 has biased composition (basic and acidic residues); it reads MDQKLSKLVE. Residues 1–20 are disordered; it reads MDQKLSKLVEELTTSGEPRL. The segment at 2 to 145 is VHS-like; that stretch reads DQKLSKLVEE…HFLRHNKKVD (144 aa). A coiled-coil region spans residues 165–199; sequence KHLDKIYQERASQAEREMQEMSGEIESCLTEVESC. Disordered stretches follow at residues 230–289 and 386–406; these read SCAG…DSDL and EGGE…EDDE. Acidic residues predominate over residues 280–289; the sequence is PSDEDEDSDL. A phosphoserine mark is found at Ser281 and Ser287. The span at 386-395 shows a compositional bias: basic and acidic residues; sequence EGGERRRTEA. Residues 397–406 show a composition bias toward acidic residues; it reads GDAEEDEDDE. Residue Lys414 forms a Glycyl lysine isopeptide (Lys-Gly) (interchain with G-Cter in ubiquitin) linkage. Positions 469 to 495 are disordered; it reads DHLPPPSSASPSRALPEPQEAQKLAAE. The span at 477 to 486 shows a compositional bias: low complexity; the sequence is ASPSRALPEP. The UVSSA-type zinc-finger motif lies at 564-591; the sequence is QHWCRAPRPDGRLCERQDRLKCPFHGKI. Zn(2+)-binding residues include Cys567, Cys577, Cys585, and His588. A disordered region spans residues 588–655; that stretch reads HGKIVPRDDE…GKGRGKKRRY (68 aa). Over residues 592–632 the composition is skewed to basic and acidic residues; it reads VPRDDEGRPLDPEDRAREQRRQLQKQERPEWQDPELMRDVE. Over residues 646–655 the composition is skewed to basic residues; it reads GKGRGKKRRY.

This sequence belongs to the UVSSA family. In terms of assembly, interacts with the elongating form of RNA polymerase II (RNA pol IIo) during transcription stress. Interacts with the TFIIH complex during transcription stress. Interacts with ERCC6. Interacts with ERCC8. Interacts with USP7. Monoubiquitinated at Lys-414 in response to transcription stress; this promotes efficient transfer of TFIIH to stalled RNA polymerase II.

Its subcellular location is the chromosome. In terms of biological role, factor involved in transcription-coupled nucleotide excision repair (TC-NER), a mechanism that rapidly removes RNA polymerase II-blocking lesions from the transcribed strand of active genes. Acts as a key adapter that promotes recruitment of factors involved in TC-NER. Facilitates the ubiquitination of the elongating form of RNA polymerase II (RNA pol IIo) at DNA damage sites, thereby promoting RNA pol IIo backtracking and access by the TC-NER machinery to lesion sites. Also promotes stabilization of ERCC6/CSB by recruiting deubiquitinating enzyme USP7 to TC-NER complexes, preventing UV-induced degradation of ERCC6 by the proteasome. Mediates the recruitment of the TFIIH complex and other factors that are required for nucleotide excision repair to RNA polymerase II. Also required to inactivate stalled RNA polymerase II by blocking the access of TCEA1/TFIIS, thereby preventing reactivation of RNA polymerase II. Not involved in processing oxidative damage. The polypeptide is UV-stimulated scaffold protein A (Homo sapiens (Human)).